The primary structure comprises 313 residues: Olfactory receptor 1G1 (313 aa).

At 1–25 (MEGKNLTSISEFFLLGFSEQLEEQK) the chain is on the extracellular side. N-linked (GlcNAc...) asparagine glycosylation occurs at Asn-5. The chain crosses the membrane as a helical span at residues 26-49 (ALFGSFLFMYLVMVAGNLLIILVI). The Cytoplasmic segment spans residues 50-57 (ITDTQLHT). A helical membrane pass occupies residues 58-79 (PMYFFLANLSLADACFVSTTVP). At 80–100 (KMLANIQIQSQAISYSGCLLQ) the chain is on the extracellular side. An intrachain disulfide couples Cys-97 to Cys-189. A helical transmembrane segment spans residues 101 to 120 (LYFFMLFVMLEAFLLAVMAY). Residues 121–140 (DHYVAICHPLHYILIMSPGL) lie on the Cytoplasmic side of the membrane. A helical membrane pass occupies residues 141-158 (CVFLVSASWIMNALYSLL). The Extracellular portion of the chain corresponds to 159-196 (HTLLMNSLSFCANHEIPHFFCDIDPLLSLSCADPFTNE). Residues 197-219 (LVIFITGGLTGLICVLCLIISYT) traverse the membrane as a helical segment. Over 220-236 (NVFSTILKIPSAQGKRK) the chain is Cytoplasmic. The chain crosses the membrane as a helical span at residues 237–259 (AFSTCSSHLSVVSLFXGTSFCVY). Over 260 to 272 (FSPPSTRXAQKDT) the chain is Extracellular. A helical transmembrane segment spans residues 273–292 (VASVMYTVVTPMLNPFIYSL). Residues 293 to 313 (RNQEIKSSLRKLIWVRKIHSP) lie on the Cytoplasmic side of the membrane.

It belongs to the G-protein coupled receptor 1 family.

It is found in the cell membrane. Its function is as follows. Odorant receptor. In Pan troglodytes (Chimpanzee), this protein is Olfactory receptor 1G1 (OR1G1).